We begin with the raw amino-acid sequence, 497 residues long: Protein nucleotidyltransferase YdiU (497 aa).

Residues G88, G90, R91, K110, D122, G123, R173, and R180 each contribute to the ATP site. Residue D249 is the Proton acceptor of the active site. Mg(2+)-binding residues include N250 and D259. ATP is bound at residue D259.

It belongs to the SELO family. Mg(2+) serves as cofactor. It depends on Mn(2+) as a cofactor.

It carries out the reaction L-seryl-[protein] + ATP = 3-O-(5'-adenylyl)-L-seryl-[protein] + diphosphate. The catalysed reaction is L-threonyl-[protein] + ATP = 3-O-(5'-adenylyl)-L-threonyl-[protein] + diphosphate. It catalyses the reaction L-tyrosyl-[protein] + ATP = O-(5'-adenylyl)-L-tyrosyl-[protein] + diphosphate. The enzyme catalyses L-histidyl-[protein] + UTP = N(tele)-(5'-uridylyl)-L-histidyl-[protein] + diphosphate. It carries out the reaction L-seryl-[protein] + UTP = O-(5'-uridylyl)-L-seryl-[protein] + diphosphate. The catalysed reaction is L-tyrosyl-[protein] + UTP = O-(5'-uridylyl)-L-tyrosyl-[protein] + diphosphate. In terms of biological role, nucleotidyltransferase involved in the post-translational modification of proteins. It can catalyze the addition of adenosine monophosphate (AMP) or uridine monophosphate (UMP) to a protein, resulting in modifications known as AMPylation and UMPylation. In Methylorubrum extorquens (strain CM4 / NCIMB 13688) (Methylobacterium extorquens), this protein is Protein nucleotidyltransferase YdiU.